A 70-amino-acid polypeptide reads, in one-letter code: Exodeoxyribonuclease 7 small subunit (70 aa).

Belongs to the XseB family. In terms of assembly, heterooligomer composed of large and small subunits.

The protein resides in the cytoplasm. It carries out the reaction Exonucleolytic cleavage in either 5'- to 3'- or 3'- to 5'-direction to yield nucleoside 5'-phosphates.. Functionally, bidirectionally degrades single-stranded DNA into large acid-insoluble oligonucleotides, which are then degraded further into small acid-soluble oligonucleotides. This chain is Exodeoxyribonuclease 7 small subunit, found in Streptococcus pneumoniae serotype 2 (strain D39 / NCTC 7466).